We begin with the raw amino-acid sequence, 494 residues long: MKKYVLALDQGTTSCRAILFDRESQIVGVAQKEFTQIYPQPGWVEHDPEEVWSTQYGVIAELLARYQVTSEEIAGIGITNQRETTVVWDKHTGKSVTNAIVWQCRRTAPLCDELKMKGLEPLFKEKTGLVLDAYFSGTKIRWILDRVPGAQEKAEKGELLFGTMDTWLVWNLTKGRIHVTDYSNASRTLLYNIKTLAWDPDLLQVLNIPLAMLPEVKPSSTIYGETAAEGLFGHPIPIAGIAGDQQAALFGQACFAPGMAKNTYGTGCFMLLNTGEELYESRHGLISTIAWGLDEKVIYALEGSVFMAGAVMQWLRDELKLIETAGDSEYFAGKVADNGGVYLVPAFTGLGAPYWDMDARGAIVGLTRGSNKNHIIRAALESMAYQTRDILEAMEADSQLPLQLLKVDGGAVVNNLLMQFQADILGVEVERPHCIETTALGAAYLAGLAIGFWSSKEELRDKAKMERSFKPQMAEERKEKYYQGWHKAVRQIME.

Residue Thr-12 participates in ADP binding. Thr-12, Thr-13, and Ser-14 together coordinate ATP. Thr-12 contributes to the sn-glycerol 3-phosphate binding site. Arg-16 contributes to the ADP binding site. The sn-glycerol 3-phosphate site is built by Arg-82, Glu-83, Tyr-134, and Asp-244. Residues Arg-82, Glu-83, Tyr-134, Asp-244, and Gln-245 each coordinate glycerol. ADP is bound by residues Thr-266 and Gly-309. The ATP site is built by Thr-266, Gly-309, Gln-313, and Gly-410. Gly-410 and Asn-414 together coordinate ADP.

This sequence belongs to the FGGY kinase family. As to quaternary structure, homotetramer and homodimer (in equilibrium).

The catalysed reaction is glycerol + ATP = sn-glycerol 3-phosphate + ADP + H(+). It functions in the pathway polyol metabolism; glycerol degradation via glycerol kinase pathway; sn-glycerol 3-phosphate from glycerol: step 1/1. Its activity is regulated as follows. Activated by phosphorylation and inhibited by fructose 1,6-bisphosphate (FBP). Functionally, key enzyme in the regulation of glycerol uptake and metabolism. Catalyzes the phosphorylation of glycerol to yield sn-glycerol 3-phosphate. This Desulfitobacterium hafniense (strain DSM 10664 / DCB-2) protein is Glycerol kinase.